We begin with the raw amino-acid sequence, 170 residues long: MHSLSQRANTIVCFGGIVLVGVLLLNVLSRAFFSDHVDVDIKLNEIHRFNTQRNFEYSFISIDLDANLEPLFNWNTKMLFLYVTAEYRTKQNVLSQVVVWDHILTEKSKANIHEKRLSKYPIINQGLGLKNNTIKLTFNYNVVPISGILTRHQVGTSEFKFPTTYMKEAY.

The Cytoplasmic portion of the chain corresponds to 1–7 (MHSLSQR). The chain crosses the membrane as a helical; Signal-anchor for type II membrane protein span at residues 8 to 28 (ANTIVCFGGIVLVGVLLLNVL). The Lumenal portion of the chain corresponds to 29-170 (SRAFFSDHVD…FPTTYMKEAY (142 aa)). Asn-131 is a glycosylation site (N-linked (GlcNAc...) asparagine).

Belongs to the SPCS3 family. Component of the signal peptidase complex (SPC) composed of a catalytic subunit sec11 and three accessory subunits spcs1, spcs2 and spcs3. The complex induces a local thinning of the ER membrane which is used to measure the length of the signal peptide (SP) h-region of protein substrates. This ensures the selectivity of the complex towards h-regions shorter than 18-20 amino acids.

It localises to the endoplasmic reticulum membrane. Its function is as follows. Essential component of the signal peptidase complex (SPC) which catalyzes the cleavage of N-terminal signal sequences from nascent proteins as they are translocated into the lumen of the endoplasmic reticulum. Essential for the SPC catalytic activity, possibly by stabilizing and positioning the active center of the complex close to the lumenal surface. This is Signal peptidase complex subunit 3 (spcs3) from Dictyostelium discoideum (Social amoeba).